The sequence spans 505 residues: Maturase K (505 aa).

Belongs to the intron maturase 2 family. MatK subfamily.

The protein resides in the plastid. It is found in the chloroplast. Usually encoded in the trnK tRNA gene intron. Probably assists in splicing its own and other chloroplast group II introns. In Micranthes integrifolia (Wholeleaf saxifrage), this protein is Maturase K.